The chain runs to 408 residues: Histidine--tRNA ligase (408 aa).

It belongs to the class-II aminoacyl-tRNA synthetase family. As to quaternary structure, homodimer.

It is found in the cytoplasm. It catalyses the reaction tRNA(His) + L-histidine + ATP = L-histidyl-tRNA(His) + AMP + diphosphate + H(+). The chain is Histidine--tRNA ligase from Campylobacter lari (strain RM2100 / D67 / ATCC BAA-1060).